The primary structure comprises 199 residues: Phosphatidylethanolamine N-methyltransferase (199 aa).

At 2–12 (SWLLGYVDPTE) the chain is on the lumenal side. The helical intramembrane region spans 13–33 (PSFVAAVLTIVFNPLFWNVVA). Topologically, residues 34–45 (RWEQRTRKLSRA) are lumenal. A helical transmembrane segment spans residues 46–66 (FGSPYLACYSLGSIILLLNIL). Residues 67–93 (RSHCFTQAMMSQPKMEGLDSHTIYFLG) lie on the Cytoplasmic side of the membrane. A helical membrane pass occupies residues 94–114 (LALLGWGLVFVLSSFYALGFT). Position 98 to 100 (98 to 100 (GWG)) interacts with S-adenosyl-L-methionine. Topologically, residues 115–157 (GTFLGDYFGILKESRVTTFPFSVLDNPMYWGSTANYLGWALMH) are lumenal. The helical transmembrane segment at 158–178 (ASPTGLLLTVLVALVYVVALL) threads the bilayer. The Cytoplasmic portion of the chain corresponds to 179–199 (FEEPFTAEIYRRKATRLHKRS). 180-181 (EE) lines the S-adenosyl-L-methionine pocket.

Belongs to the class VI-like SAM-binding methyltransferase superfamily. PEMT/PEM2 methyltransferase family. In terms of tissue distribution, expressed in liver (at protein level).

The protein resides in the endoplasmic reticulum membrane. It localises to the mitochondrion membrane. It catalyses the reaction a 1,2-diacyl-sn-glycero-3-phosphoethanolamine + S-adenosyl-L-methionine = a 1,2-diacyl-sn-glycero-3-phospho-N-methylethanolamine + S-adenosyl-L-homocysteine + H(+). It carries out the reaction a 1,2-diacyl-sn-glycero-3-phospho-N-methylethanolamine + S-adenosyl-L-methionine = a 1,2-diacyl-sn-glycero-3-phospho-N,N-dimethylethanolamine + S-adenosyl-L-homocysteine + H(+). The catalysed reaction is a 1,2-diacyl-sn-glycero-3-phospho-N,N-dimethylethanolamine + S-adenosyl-L-methionine = a 1,2-diacyl-sn-glycero-3-phosphocholine + S-adenosyl-L-homocysteine + H(+). The enzyme catalyses 1,2-di-(9Z-octadecenoyl)-sn-glycero-3-phosphoethanolamine + S-adenosyl-L-methionine = 1,2-di-(9Z-octadecenoyl)-sn-glycero-3-phospho-N-methylethanolamine + S-adenosyl-L-homocysteine + H(+). It catalyses the reaction 1,2-di-(9Z-octadecenoyl)-sn-glycero-3-phospho-N-methylethanolamine + S-adenosyl-L-methionine = 1,2-di-(9Z-octadecenoyl)-sn-glycero-3-phospho-N,N-dimethylethanolamine + S-adenosyl-L-homocysteine + H(+). It carries out the reaction 1,2-di-(9Z-octadecenoyl)-sn-glycero-3-phospho-N,N-dimethylethanolamine + S-adenosyl-L-methionine = 1,2-di-(9Z-octadecenoyl)-sn-glycero-3-phosphocholine + S-adenosyl-L-homocysteine + H(+). The catalysed reaction is 1,2-di-(9Z,12Z-octadecadienoyl)-sn-glycero-3-phosphoethanolamine + S-adenosyl-L-methionine = 1,2-di-(9Z,12Z-octadecadienoyl)-sn-glycero-3-phospho-N-methylethanolamine + S-adenosyl-L-homocysteine + H(+). The enzyme catalyses 1,2-di-(9Z,12Z-octadecadienoyl)-sn-glycero-3-phospho-N-methylethanolamine + S-adenosyl-L-methionine = 1,2-di-(9Z,12Z-octadecadienoyl)-sn-glycero-3-phospho-N,N-dimethylethanolamine + S-adenosyl-L-homocysteine + H(+). It catalyses the reaction 1,2-di-(9Z,12Z-octadecadienoyl)-sn-glycero-3-phospho-N,N-dimethylethanolamine + S-adenosyl-L-methionine = 1,2-di-(9Z,12Z-octadecadienoyl)-sn-glycero-3-phosphocholine + S-adenosyl-L-homocysteine + H(+). It carries out the reaction 1,2-di-(9Z,12Z,15Z-octadecatrienoyl)-sn-glycero-3-phosphoethanolamine + S-adenosyl-L-methionine = 1,2-di-(9Z,12Z,15Z-octadecatrienoyl)-sn-glycero-3-phospho-N-methylethanolamine + S-adenosyl-L-homocysteine + H(+). The catalysed reaction is 1,2-di-(9Z,12Z,15Z-octadecatrienoyl)-sn-glycero-3-phospho-N-methylethanolamine + S-adenosyl-L-methionine = 1,2-di-(9Z,12Z,15Z-octadecatrienoyl)-sn-glycero-3-phospho-N,N-dimethylethanolamine + S-adenosyl-L-homocysteine + H(+). The enzyme catalyses 1,2-di-(9Z,12Z,15Z-octadecatrienoyl)-sn-glycero-3-phospho-N,N-dimethylethanolamine + S-adenosyl-L-methionine = 1,2-di-(9Z,12Z,15Z-octadecatrienoyl)-sn-glycero-3-phosphocholine + S-adenosyl-L-homocysteine + H(+). It catalyses the reaction 1-hexadecanoyl-2-(4Z,7Z,10Z,13Z,16Z,19Z-docosahexaenoyl)-sn-glycero-3-phosphoethanolamine + S-adenosyl-L-methionine = 1-hexadecanoyl-2-(4Z,7Z,10Z,13Z,16Z,19Z-docosahexaenoyl)-sn-glycero-3-phospho-N-methylethanolamine + S-adenosyl-L-homocysteine + H(+). It carries out the reaction 1-hexadecanoyl-2-(4Z,7Z,10Z,13Z,16Z,19Z-docosahexaenoyl)-sn-glycero-3-phospho-N-methylethanolamine + S-adenosyl-L-methionine = 1-hexadecanoyl-2-(4Z,7Z,10Z,13Z,16Z,19Z-docosahexaenoyl)-sn-glycero-3-phospho-N,N-dimethylethanolamine + S-adenosyl-L-homocysteine + H(+). The catalysed reaction is 1-hexadecanoyl-2-(4Z,7Z,10Z,13Z,16Z,19Z-docosahexaenoyl)-sn-glycero-3-phospho-N,N-dimethylethanolamine + S-adenosyl-L-methionine = 1-hexadecanoyl-2-(4Z,7Z,10Z,13Z,16Z,19Z-docosahexaenoyl)-sn-glycero-3-phosphocholine + S-adenosyl-L-homocysteine + H(+). It functions in the pathway phospholipid metabolism; phosphatidylcholine biosynthesis. Functionally, catalyzes the three sequential steps of the methylation pathway for the biosynthesis of phosphatidylcholine, a critical and essential component for membrane structure. Uses S-adenosylmethionine (S-adenosyl-L-methionine, SAM or AdoMet) as the methyl group donor for the methylation of phosphatidylethanolamine (1,2-diacyl-sn-glycero-3-phosphoethanolamine, PE) to phosphatidylmonomethylethanolamine (1,2-diacyl-sn-glycero-3-phospho-N-methylethanolamine, PMME), PMME to phosphatidyldimethylethanolamine (1,2-diacyl-sn-glycero-3-phospho-N,N-dimethylethanolamine, PDME), and PDME to phosphatidylcholine (1,2-diacyl-sn-glycero-3-phosphocholine, PC), producing S-adenosyl-L-homocysteine in each step. The chain is Phosphatidylethanolamine N-methyltransferase from Rattus norvegicus (Rat).